The chain runs to 116 residues: Large ribosomal subunit protein bL17 (116 aa).

The protein belongs to the bacterial ribosomal protein bL17 family. Part of the 50S ribosomal subunit. Contacts protein L32.

This is Large ribosomal subunit protein bL17 from Aliarcobacter butzleri (strain RM4018) (Arcobacter butzleri).